A 462-amino-acid chain; its full sequence is Arginine biosynthesis bifunctional protein ArgJ, mitochondrial (462 aa).

Positions 189, 215, 236, 327, 457, and 462 each coordinate substrate. The active-site Nucleophile is threonine 236.

It belongs to the ArgJ family. In terms of assembly, heterodimer of an alpha and a beta chain. The alpha and beta chains are autoproteolytically processed from a single precursor protein within the mitochondrion.

The protein localises to the mitochondrion matrix. It carries out the reaction N(2)-acetyl-L-ornithine + L-glutamate = N-acetyl-L-glutamate + L-ornithine. The catalysed reaction is L-glutamate + acetyl-CoA = N-acetyl-L-glutamate + CoA + H(+). It functions in the pathway amino-acid biosynthesis; L-arginine biosynthesis; L-ornithine and N-acetyl-L-glutamate from L-glutamate and N(2)-acetyl-L-ornithine (cyclic): step 1/1. The protein operates within amino-acid biosynthesis; L-arginine biosynthesis; N(2)-acetyl-L-ornithine from L-glutamate: step 1/4. In terms of biological role, catalyzes two activities which are involved in the cyclic version of arginine biosynthesis: the synthesis of acetylglutamate from glutamate and acetyl-CoA, and of ornithine by transacetylation between acetylornithine and glutamate. In Postia placenta (strain ATCC 44394 / Madison 698-R) (Brown rot fungus), this protein is Arginine biosynthesis bifunctional protein ArgJ, mitochondrial.